The chain runs to 393 residues: Decapping nuclease dom-3 (393 aa).

Positions 1 to 37 are disordered; it reads MSHYGGNPRGNSSHQFGRKDFQQSDSKHIPKITGQPL. Basic and acidic residues predominate over residues 17-28; that stretch reads GRKDFQQSDSKH. Residues R74, E113, and 144 to 146 each bind substrate; that span reads WRG. Mg(2+)-binding residues include E205, E257, D259, E269, and L270. Residue E257 coordinates substrate. 2 residues coordinate substrate: K271 and Q293.

This sequence belongs to the DXO/Dom3Z family. It depends on Mg(2+) as a cofactor.

The enzyme catalyses a 5'-end NAD(+)-phospho-ribonucleoside in mRNA + H2O = a 5'-end phospho-ribonucleoside in mRNA + NAD(+) + H(+). It carries out the reaction a 5'-end (N(7)-methyl 5'-triphosphoguanosine)-ribonucleoside-ribonucleotide in mRNA + H2O = a (N(7)-methyl 5'-triphosphoguanosine)-nucleoside + a 5'-end phospho-ribonucleoside in mRNA + H(+). It catalyses the reaction a 5'-end triphospho-ribonucleoside in mRNA + H2O = a 5'-end phospho-ribonucleoside in mRNA + diphosphate + H(+). In terms of biological role, decapping enzyme for NAD-capped RNAs: specifically hydrolyzes the nicotinamide adenine dinucleotide (NAD) cap from a subset of RNAs by removing the entire NAD moiety from the 5'-end of an NAD-capped RNA. The NAD-cap is present at the 5'-end of some RNAs and snoRNAs. In contrast to the canonical 5'-end N7 methylguanosine (m7G) cap, the NAD cap promotes mRNA decay. Also acts as a non-canonical decapping enzyme that removes the entire cap structure of m7G capped or incompletely capped RNAs and mediates their subsequent degradation. Specifically degrades pre-mRNAs with a defective 5'-end m7G cap and is part of a pre-mRNA capping quality control. Also possesses RNA 5'-pyrophosphohydrolase activity by hydrolyzing the 5'-end triphosphate to release pyrophosphates. This Caenorhabditis elegans protein is Decapping nuclease dom-3.